A 1059-amino-acid chain; its full sequence is Protein cappuccino (1059 aa).

2 stretches are compositionally biased toward polar residues: residues 62–80 and 90–123; these read AAVT…NESG and ATTS…SAAS. 2 disordered regions span residues 62–146 and 448–647; these read AAVT…GTPT and QTES…TAPP. Over residues 133–142 the composition is skewed to pro residues; it reads LPLPPPPPGF. Positions 468-481 are enriched in basic and acidic residues; sequence SDNESAKEDGEKPH. Residues 480-560 form the FH1 domain; sequence PHAVAPPPPP…PPPPMSASPS (81 aa). Positions 483-541 are enriched in pro residues; the sequence is VAPPPPPPPPPLHAFVAPPPPPPPPPPPPPPLANYGAPPPPPPPPPGSGSAPPPPPPAP. The region spanning 585–1032 is the FH2 domain; sequence RKSAVNPPKP…KKSKQAQIES (448 aa). The segment covering 620 to 629 has biased composition (polar residues); it reads TDSTENSGSS. The interval 1049–1059 is important for interaction with spir; sequence KERMLMRRSKN.

Belongs to the formin homology family. Cappuccino subfamily. Interacts with wash. Interacts with spir.

It is found in the cytoplasm. It localises to the cytoskeleton. Its subcellular location is the cytosol. The protein resides in the membrane. The protein localises to the cytoplasmic vesicle membrane. Acts as an actin nucleation factor and promotes assembly of actin filaments together with spir. May play a role in intracellular vesicle transport along actin fibers, providing a novel link between actin cytoskeleton dynamics and intracellular transport. The protein is Protein cappuccino (capu) of Drosophila melanogaster (Fruit fly).